Consider the following 359-residue polypeptide: WAT1-related protein At4g16620 (359 aa).

10 consecutive transmembrane segments (helical) span residues 5-25, 41-61, 77-97, 105-125, 143-163, 183-203, 206-226, 246-266, 279-299, and 305-325; these read ETLI…IYAG, LLIV…LAFL, IKLV…FLEG, MATA…WAAG, TVLC…TATL, ILGC…IVLQ, ILAE…MGGI, VIGL…SGGG, PVIV…VSAF, and FNLG…FVLW. In terms of domain architecture, EamA 1 spans 30–154; it reads LSQLLSLGID…LCVMGALIMS (125 aa). The EamA 2 domain occupies 206–324; it reads ILAEFPAPIS…LMFGGLYFVL (119 aa).

Belongs to the drug/metabolite transporter (DMT) superfamily. Plant drug/metabolite exporter (P-DME) (TC 2.A.7.4) family.

Its subcellular location is the membrane. This Arabidopsis thaliana (Mouse-ear cress) protein is WAT1-related protein At4g16620.